Consider the following 351-residue polypeptide: Terpene cyclase sdgD (351 aa).

9 consecutive transmembrane segments (helical) span residues 7–27, 62–82, 89–109, 126–146, 160–180, 193–213, 229–249, 281–301, and 316–336; these read INFI…TILI, TGVP…WPVI, LSLL…LLLL, WVGL…YCAI, IPHV…LVAL, VVVA…FMAS, IYIF…LASL, FLQW…VAVY, and LEVC…LLIW.

It belongs to the membrane-bound ascI terpene cyclase family.

The protein localises to the membrane. The protein operates within secondary metabolite biosynthesis. Functionally, epoxide hydrolase; part of the gene cluster that mediates the biosynthesis of the polyenes aspernidgulenes. The carbon backbone of aspernidgulenes is synthesized by the HR-PKS sdgA, which accepts acetyl-CoA as the starter unit and performs malonyl-CoA extensions as well as regioselective methylation and reduction. The resulting nonaketide offloads the HR-PKS by intramolecular lactonization to yield the 5,6-dihydro-alpha-pyrone-containing hexaenoic acids preaspernidgulene A1 and A2. The FAD-dependent monooxygenase sdgC then installs the first epoxide on the penultimate double bond. Subsequently, the FAD-dependent monooxygenase sdgF presumably generates a ketone intermediate through Meinwald rearrangement involving a hydride shift. Next, sdgC introduces another epoxide on the last olefin of the ketone intermediate after E/Z isomerization. The epoxide hydrolase sdgD then catalyzes stereospecific cyclization of the 5,6-dihydro-alpha-pyrone and opening of the epoxide ring to form an oxygenated trimethylcyclopentanone and an oxabicyclo[2.2.1]heptane unit. Finally, the bicyclic unit undergoes hydrolytic cleavage, either spontaneously or catalyzed by sdgD, to assemble the dimethyl-gamma-lactone moiety in aspernidgulene A1. This chain is Terpene cyclase sdgD, found in Emericella nidulans (strain FGSC A4 / ATCC 38163 / CBS 112.46 / NRRL 194 / M139) (Aspergillus nidulans).